A 238-amino-acid chain; its full sequence is Gas vesicle protein F (238 aa).

It belongs to the gas vesicle GvpF/GvpL family. Binds GvpA.

The protein resides in the gas vesicle. A minor component of the gas vesicle, may be involved in preventing GvpA aggregation during gas vesicle nucleation. Gas vesicles are hollow, gas filled proteinaceous nanostructures found in some microorganisms. It is not clear what function gas vesicles perform in soil bacteria. The chain is Gas vesicle protein F from Streptomyces sp. (strain CB03234).